A 339-amino-acid polypeptide reads, in one-letter code: Probable G-protein coupled receptor 33 (339 aa).

At 1 to 30 the chain is on the extracellular side; it reads MDRVNSSGHVISVSPSLTNSTGVPTPAPKA. N-linked (GlcNAc...) asparagine glycans are attached at residues Asn5 and Asn19. The helical transmembrane segment at 31-53 threads the bilayer; the sequence is IIAAALFMSFIVGTISNGLYLWM. Topologically, residues 54–64 are cytoplasmic; that stretch reads LKFKMQRTVNT. Residues 65-86 form a helical membrane-spanning segment; sequence LLFFHLILSYFISTLILPFMAT. Residues 87–103 are Extracellular-facing; it reads SFLQDNHWAFGSVLCKV. Cys101 and Cys179 form a disulfide bridge. A helical transmembrane segment spans residues 104–124; it reads FNSTLSVSMFASVFFLSAISV. Residues 125 to 143 lie on the Cytoplasmic side of the membrane; that stretch reads DRYHLTLHPVWSQQHRTPR. A helical membrane pass occupies residues 144–165; that stretch reads WASRIALRIWILATILSIPYLV. The Extracellular segment spans residues 166–209; that stretch reads FRETHDDHKGRIKCQNNYIVGTNWESSEHQTLGQWIHAACFGRR. A helical membrane pass occupies residues 210-230; the sequence is FLLGFLLPFLVIVFCYKRVAT. Residues 231 to 246 lie on the Cytoplasmic side of the membrane; that stretch reads KMKDKGLFKSSKPFKV. A helical transmembrane segment spans residues 247 to 268; sequence MLTAVVSFFVCWMPYHVHSGLV. The Extracellular portion of the chain corresponds to 269 to 283; sequence LTKSQPLPSQLTLGL. The helical transmembrane segment at 284–303 threads the bilayer; sequence AVVTISFNTVVSPILYLFTG. The Cytoplasmic segment spans residues 304–339; sequence ENFEVFKKSILALFKSTFSDSSATERTQTLNSETEI.

This sequence belongs to the G-protein coupled receptor 1 family.

It is found in the cell membrane. Functionally, orphan receptor; could be a chemoattractant receptor. The protein is Probable G-protein coupled receptor 33 (Gpr33) of Rattus rattus (Black rat).